Reading from the N-terminus, the 709-residue chain is Transcriptional factor SWI5 (709 aa).

S225 is subject to Phosphoserine. A compositionally biased stretch (polar residues) spans 245–264; sequence LSPMISPPMSNTSFTGSPSR. A disordered region spans residues 245-267; that stretch reads LSPMISPPMSNTSFTGSPSRRNN. A phosphoserine mark is found at S278 and S300. T339 is subject to Phosphothreonine. S376 carries the phosphoserine modification. The segment at 443–483 is disordered; the sequence is LKPPSQQARHREGVFNDLDPNVLTKNTDNEGDDNEENEPES. The segment covering 471–480 has biased composition (acidic residues); it reads NEGDDNEENE. Residues S488, S492, and S505 each carry the phosphoserine modification. S522 carries the post-translational modification Phosphoserine; by CDC28. C2H2-type zinc fingers lie at residues 550 to 574, 580 to 604, and 609 to 632; these read FECLFPGCTKTFKRRYNIRSHIQTH, YSCDHPGCDKAFVRNHDLIRHKKSH, and YACPCGKKFNREDALVVHRSRMIC. Positions 635 to 659 match the Nuclear localization signal motif; it reads GKKYENVVIKRSPRKRGRPRKDGTS. A disordered region spans residues 644–677; that stretch reads KRSPRKRGRPRKDGTSSVSSSPIKENINKDHNGQ. A Phosphoserine; by CDC28 modification is found at S646. Residues 647-659 constitute a DNA-binding region (a.T hook); that stretch reads PRKRGRPRKDGTS. At S664 the chain carries Phosphoserine; by CDC28.

Post-translationally, cell cycle-dependent phosphorylation of three serine residues prevents SWI5 from entering the nucleus, and it accumulates in the cytoplasm. As a consequence of CDC28 kinase inactivation at the end of anaphase, the three serine residues are dephosphorylated and SWI5 enters the nucleus to activate transcription. It is then rapidly degraded. Threonine phosphorylation also seems to occur. Phosphorylated by PHO85.

It localises to the nucleus. The protein resides in the cytoplasm. Determines the mother-cell-specific transcription of the HO endonuclease gene that is responsible for the initiation of mating-type switching in yeast. Recognizes a specific sequence in the promoter of the HO gene. Activates EGT2 transcription in a concentration-dependent manner. Synthesized during G2 and early mitosis. The sequence is that of Transcriptional factor SWI5 (SWI5) from Saccharomyces cerevisiae (strain ATCC 204508 / S288c) (Baker's yeast).